The sequence spans 247 residues: Ribonuclease 3 (247 aa).

The region spanning 23 to 149 (HADLLERLGV…LLGAIFRQHG (127 aa)) is the RNase III domain. E62 is a Mg(2+) binding site. D66 is an active-site residue. Residues D135 and E138 each coordinate Mg(2+). Residue E138 is part of the active site. The DRBM domain maps to 176-244 (DWKTTLQEEL…ARQAFLKLRE (69 aa)).

The protein belongs to the ribonuclease III family. As to quaternary structure, homodimer. The cofactor is Mg(2+).

The protein localises to the cytoplasm. It catalyses the reaction Endonucleolytic cleavage to 5'-phosphomonoester.. Its function is as follows. Digests double-stranded RNA. Involved in the processing of primary rRNA transcript to yield the immediate precursors to the large and small rRNAs (23S and 16S). Processes some mRNAs, and tRNAs when they are encoded in the rRNA operon. Processes pre-crRNA and tracrRNA of type II CRISPR loci if present in the organism. This chain is Ribonuclease 3, found in Corynebacterium efficiens (strain DSM 44549 / YS-314 / AJ 12310 / JCM 11189 / NBRC 100395).